Consider the following 96-residue polypeptide: Secretoglobin family 2B member 2 (96 aa).

The signal sequence occupies residues 1–23 (MRVTSATCALLLALICSVQLGDA).

It belongs to the secretoglobin family.

It localises to the secreted. This is Secretoglobin family 2B member 2 (SCGB2B2) from Homo sapiens (Human).